The primary structure comprises 115 residues: uncharacterized protein (115 aa).

This is an uncharacterized protein from Acidianus sp. F28 (AFV-2).